The following is a 375-amino-acid chain: Circadian-associated transcriptional repressor (375 aa).

The segment covering 1 to 32 (MDSPSSVSSYSSSSLSPSFSTSSVNSDFSFPS) has biased composition (low complexity). 3 disordered regions span residues 1 to 102 (MDSP…LNTQ), 192 to 218 (KSSS…AASP), and 351 to 375 (DREM…DPQP). Positions 33–46 (DNEREGKGTHELRP) are enriched in basic and acidic residues.

In terms of assembly, interacts with BMAL1, PER2, CRY2, BHLHE41, HDAC1 NR3C1.

It localises to the nucleus. It is found in the PML body. In terms of biological role, transcriptional repressor which forms a negative regulatory component of the circadian clock and acts independently of the circadian transcriptional repressors: CRY1, CRY2 and BHLHE41. In a histone deacetylase-dependent manner represses the transcriptional activator activity of the CLOCK-BMAL1 heterodimer. Abrogates the interaction of BMAL1 with the transcriptional coactivator CREBBP and can repress the histone acetyl-transferase activity of the CLOCK-BMAL1 heterodimer, reducing histone acetylation of its target genes. Rhythmically binds the E-box elements (5'-CACGTG-3') on circadian gene promoters and its occupancy shows circadian oscillation antiphasic to BMAL1. Interacts with the glucocorticoid receptor (NR3C1) and contributes to the repressive function in the glucocorticoid response. The polypeptide is Circadian-associated transcriptional repressor (Ciart) (Mus musculus (Mouse)).